The primary structure comprises 85 residues: uncharacterized protein (85 aa).

2 disordered regions span residues 1–22 (MFAP…TSGF) and 41–85 (EKER…SFLR). The segment covering 75–85 (FPSNYRGSFLR) has biased composition (polar residues).

This is an uncharacterized protein from Dryophytes versicolor (chameleon treefrog).